Here is a 318-residue protein sequence, read N- to C-terminus: tRNA-modifying protein YgfZ (318 aa).

Folate-binding residues include tryptophan 28 and tryptophan 182.

This sequence belongs to the tRNA-modifying YgfZ family.

Its subcellular location is the cytoplasm. In terms of biological role, folate-binding protein involved in regulating the level of ATP-DnaA and in the modification of some tRNAs. It is probably a key factor in regulatory networks that act via tRNA modification, such as initiation of chromosomal replication. The protein is tRNA-modifying protein YgfZ of Aliivibrio fischeri (strain ATCC 700601 / ES114) (Vibrio fischeri).